The primary structure comprises 137 residues: Fluoride-specific ion channel FluC 4 (137 aa).

The next 4 membrane-spanning stretches (helical) occupy residues alanine 20–alanine 40, leucine 43–leucine 63, glycine 83–leucine 103, and alanine 110–isoleucine 130. Residues glycine 86 and threonine 89 each contribute to the Na(+) site.

The protein belongs to the fluoride channel Fluc/FEX (TC 1.A.43) family.

It is found in the cell inner membrane. The catalysed reaction is fluoride(in) = fluoride(out). Its activity is regulated as follows. Na(+) is not transported, but it plays an essential structural role and its presence is essential for fluoride channel function. Fluoride-specific ion channel. Important for reducing fluoride concentration in the cell, thus reducing its toxicity. The sequence is that of Fluoride-specific ion channel FluC 4 from Brucella suis biovar 1 (strain 1330).